The following is a 341-amino-acid chain: DNA-directed RNA polymerase subunit alpha (341 aa).

Positions 1-223 (MEQKRPQLKA…DELSVFGNVE (223 aa)) are alpha N-terminal domain (alpha-NTD). Residues 268 to 341 (PQPFPTDQDT…LAQFGLALRD (74 aa)) are alpha C-terminal domain (alpha-CTD).

The protein belongs to the RNA polymerase alpha chain family. Homodimer. The RNAP catalytic core consists of 2 alpha, 1 beta, 1 beta' and 1 omega subunit. When a sigma factor is associated with the core the holoenzyme is formed, which can initiate transcription.

It carries out the reaction RNA(n) + a ribonucleoside 5'-triphosphate = RNA(n+1) + diphosphate. DNA-dependent RNA polymerase catalyzes the transcription of DNA into RNA using the four ribonucleoside triphosphates as substrates. This chain is DNA-directed RNA polymerase subunit alpha, found in Deinococcus radiodurans (strain ATCC 13939 / DSM 20539 / JCM 16871 / CCUG 27074 / LMG 4051 / NBRC 15346 / NCIMB 9279 / VKM B-1422 / R1).